The primary structure comprises 126 residues: Type 1 phosphatases regulator YPI1 (126 aa).

A compositionally biased stretch (polar residues) spans 1–16; it reads MSHNQQAAQPSSSRTQ. Positions 1–126 are disordered; sequence MSHNQQAAQP…YERKPRPKKN (126 aa). A compositionally biased stretch (basic and acidic residues) spans 38 to 53; sequence SNVRFTEEVVDNEHMD. Residues 71 to 91 show a composition bias toward acidic residues; sequence ESSEEESCGSDDSGPESDEGD. Basic residues predominate over residues 96-107; the sequence is RKPKKKNKGKCG. Basic and acidic residues predominate over residues 108 to 120; the sequence is GHRDPSPNAYERK.

It belongs to the YPI1 family.

It localises to the nucleus. Its function is as follows. Regulator of type 1 phosphatases which maintains protein phosphatase activity under strict control. This is Type 1 phosphatases regulator YPI1 (YPI1) from Yarrowia lipolytica (strain CLIB 122 / E 150) (Yeast).